Here is a 108-residue protein sequence, read N- to C-terminus: Thiosulfate sulfurtransferase GlpE (108 aa).

Residues 17-105 (QEKEAVLVDI…WQRQFPAEVA (89 aa)) enclose the Rhodanese domain. Residue cysteine 65 is the Cysteine persulfide intermediate of the active site.

Belongs to the GlpE family.

It is found in the cytoplasm. It carries out the reaction thiosulfate + hydrogen cyanide = thiocyanate + sulfite + 2 H(+). It catalyses the reaction thiosulfate + [thioredoxin]-dithiol = [thioredoxin]-disulfide + hydrogen sulfide + sulfite + 2 H(+). Transferase that catalyzes the transfer of sulfur from thiosulfate to thiophilic acceptors such as cyanide or dithiols. May function in a CysM-independent thiosulfate assimilation pathway by catalyzing the conversion of thiosulfate to sulfite, which can then be used for L-cysteine biosynthesis. In Escherichia coli O127:H6 (strain E2348/69 / EPEC), this protein is Thiosulfate sulfurtransferase GlpE.